A 113-amino-acid chain; its full sequence is Ferredoxin-1 (113 aa).

4Fe-4S ferredoxin-type domains lie at Thr-2–Glu-30 and Asn-31–Glu-60. Cys-9 and Cys-17 together coordinate [3Fe-4S] cluster. [4Fe-4S] cluster contacts are provided by Cys-21, Cys-40, Cys-43, and Cys-46. [3Fe-4S] cluster is bound at residue Cys-50.

It depends on [4Fe-4S] cluster as a cofactor. [3Fe-4S] cluster serves as cofactor.

The chain is Ferredoxin-1 (fdxA) from Caulobacter vibrioides (strain ATCC 19089 / CIP 103742 / CB 15) (Caulobacter crescentus).